Here is a 177-residue protein sequence, read N- to C-terminus: Large ribosomal subunit protein uL6 (177 aa).

The protein belongs to the universal ribosomal protein uL6 family. Part of the 50S ribosomal subunit.

Its function is as follows. This protein binds to the 23S rRNA, and is important in its secondary structure. It is located near the subunit interface in the base of the L7/L12 stalk, and near the tRNA binding site of the peptidyltransferase center. This Methylorubrum extorquens (strain CM4 / NCIMB 13688) (Methylobacterium extorquens) protein is Large ribosomal subunit protein uL6.